The following is a 603-amino-acid chain: MADPKGSTSKEGLEDWCIVEAECSDVENDLEELFDRDTDSDISELLDDNDLEQGNSRELFHQQESKESEEQLQKLKRKYLSPKAVAQLSPRLESITLSPQQKSKRRLFAEQDSGLECTLTNEEDVSSEVEVPALDSQPVAEAQLGTVDIHYKELLRASNNKAILMAKFKEFFGVGFNDLTRQFKSYKTCCNAWVLSVYAVHDDLLESSKQLLQQHCDYIWIRGIGAMSLFLLCFKVGKNRGTVHKLMTAMLNVHEKQIISEPPKLRNVAAALFWYKGAMGSGAFTYGPYPDWIAQQTIVGHQSTEASAFDMSAMVQWAFDNNYLDEADIAYQYAKLAPEDSNAVAWLAHNNQARYVREVASMVRFYKKGQMKEMSMSEWIHTRINEVEGEGHWSTIAKFLRYQQVNFIMFLAALKDMLHSVPKRNCILIYGPPNTGKSAFTMSLIHVLRGRVLSFVNSKSQFWLQPMSECKIALIDDVTDPCWIYMDTYLRNGLDGHVVSLDCKHKAPMQTKFPALLLTSNINVHNEVNYRYLHSRIKGFEFPNPFPMKADNTPEFELTDQSWKSFFTRLWNQLELSDQEDEGENGESQRSFQCSARSANEHL.

The tract at residues 47 to 68 (DDNDLEQGNSRELFHQQESKES) is disordered. Basic and acidic residues predominate over residues 58-68 (ELFHQQESKES). The Nuclear localization signal motif lies at 76-78 (KRK). A phosphoserine; by host mark is found at S81 and S89. The Nuclear export signal signature appears at 88–97 (LSPRLESITL). Residues 143-306 (QLGTVDIHYK…TIVGHQSTEA (164 aa)) form a DNA-binding region region. Residues 405–555 (VNFIMFLAAL…FPMKADNTPE (151 aa)) enclose the SF3 helicase domain. 431-438 (GPPNTGKS) provides a ligand contact to ATP. K512 participates in a covalent cross-link: Glycyl lysine isopeptide (Lys-Gly) (interchain with G-Cter in SUMO). The interval 578–603 (DQEDEGENGESQRSFQCSARSANEHL) is disordered. A compositionally biased stretch (polar residues) spans 586–603 (GESQRSFQCSARSANEHL).

It belongs to the papillomaviridae E1 protein family. As to quaternary structure, can form hexamers. Interacts with E2 protein; this interaction increases E1 DNA binding specificity. Interacts with host DNA polymerase subunit POLA2. Interacts with host single stranded DNA-binding protein RPA1. Interacts with host TOP1; this interaction stimulates the enzymatic activity of TOP1. In terms of processing, phosphorylated. Sumoylated.

It localises to the host nucleus. It catalyses the reaction Couples ATP hydrolysis with the unwinding of duplex DNA by translocating in the 3'-5' direction.. It carries out the reaction ATP + H2O = ADP + phosphate + H(+). Functionally, ATP-dependent DNA 3'-5' helicase required for initiation of viral DNA replication. It forms a complex with the viral E2 protein. The E1-E2 complex binds to the replication origin which contains binding sites for both proteins. During the initial step, a dimer of E1 interacts with a dimer of protein E2 leading to a complex that binds the viral origin of replication with high specificity. Then, a second dimer of E1 displaces the E2 dimer in an ATP-dependent manner to form the E1 tetramer. Following this, two E1 monomers are added to each half of the site, which results in the formation of two E1 trimers on the viral ori. Subsequently, two hexamers will be created. The double hexamer acts as a bi-directional helicase machinery and unwinds the viral DNA and then recruits the host DNA polymerase to start replication. The chain is Replication protein E1 from Human papillomavirus 21.